Reading from the N-terminus, the 257-residue chain is MANTRVIELFDEFTDLIRDFIVRHEITTPEYETIMQYMISVGEAGEWPLWLDAFFETTVDSVSYGKGNWTSSAIQGPFFKEGAPLLTGKPATLPMRADEPGDRMRFTGSVRDTSGTPITGAVIDVWHSTNDGNYSFFSPALPDQYLLRGRVVPAEDGSIEFHSIRPVPYEIPKAGPTGQLMNSYLGRHSWRPAHIHIRITADGYRPLITQLYFEGDPYLDSDSCSAVKSELVLPVNKIDIDGETWQLVDFNFILQHN.

4 residues coordinate Fe cation: Tyr-134, Tyr-169, His-194, and His-196.

It belongs to the intradiol ring-cleavage dioxygenase family. The cofactor is Fe(3+).

It catalyses the reaction 4-chlorocatechol + O2 = 3-chloro-cis,cis-muconate + 2 H(+). It carries out the reaction 3,5-dichlorocatechol + O2 = (2E,4E)-2,4-dichloromuconate + 2 H(+). This chain is Chlorocatechol 1,2-dioxygenase (clcA), found in Rhodococcus opacus (Nocardia opaca).